The chain runs to 594 residues: Estrogen receptor (594 aa).

The segment at 1-184 (MTMTLHTKAS…AMESAKETRY (184 aa)) is modulating (transactivation AF-1); mediates interaction with MACROD1. Ser10 carries O-linked (GlcNAc) serine glycosylation. Positions 35-47 (LERPLGEVYVESS) are required for interaction with NCOA1. Residues 35 to 174 (LERPLGEVYV…LASSGDKGSM (140 aa)) form an interaction with DDX5; self-association region. 2 positions are modified to phosphoserine; by CDK2: Ser104 and Ser106. Ser118 is subject to Phosphoserine. Residues 152–173 (PNADNRRQGGRERLASSGDKGS) form a disordered region. A compositionally biased stretch (basic and acidic residues) spans 154–165 (ADNRRQGGRERL). The residue at position 167 (Ser167) is a Phosphoserine; by CK2. 2 NR C4-type zinc fingers span residues 185–205 (CAVC…CEGC) and 221–245 (CPAT…LRKC). The segment at residues 185–250 (CAVCNDYASG…RLRKCYEVGM (66 aa)) is a DNA-binding region (nuclear receptor). The interval 185–310 (CAVCNDYASG…TKKISPVLSL (126 aa)) is mediates interaction with DNTTIP2. The segment at 251 to 310 (MKGGIRKDRRGGRMLKHKRQRDDGEGRNEAGPSGDRRPANFWPSPLLIKHTKKISPVLSL) is hinge. Over residues 257-269 (KDRRGGRMLKHKR) the composition is skewed to basic residues. A disordered region spans residues 257 to 293 (KDRRGGRMLKHKRQRDDGEGRNEAGPSGDRRPANFWP). Asymmetric dimethylarginine; by PRMT1 is present on Arg260. Residues 262-594 (GRMLKHKRQR…GEAEGFPNTI (333 aa)) are interaction with AKAP13. Residues 264–594 (MLKHKRQRDD…GEAEGFPNTI (331 aa)) form a self-association region. A compositionally biased stretch (basic and acidic residues) spans 270–288 (QRDDGEGRNEAGPSGDRRP). In terms of domain architecture, NR LBD spans 311–546 (TAEQMISALL…DLLLEMLDAH (236 aa)). The interval 311–594 (TAEQMISALL…GEAEGFPNTI (284 aa)) is transactivation AF-2. 2 residues coordinate 17beta-estradiol: Glu353 and Arg394. Residue Cys447 is the site of S-palmitoyl cysteine attachment. His523 provides a ligand contact to 17beta-estradiol. Phosphotyrosine; by Tyr-kinases is present on Tyr536. A disordered region spans residues 551–575 (PANHGGAPMEETNQSQLATTGSTSP). Positions 561-575 (ETNQSQLATTGSTSP) are enriched in polar residues. The O-linked (GlcNAc) threonine glycan is linked to Thr570.

It belongs to the nuclear hormone receptor family. NR3 subfamily. As to quaternary structure, binds DNA as a homodimer. Can form a heterodimer with ESR2. Interacts with coactivator NCOA5. Interacts with PELP1, the interaction is enhanced by 17-beta-estradiol; the interaction increases ESR1 transcriptional activity. Interacts with NCOA7; the interaction is ligand-inducible. Interacts with AKAP13, CUEDC2, HEXIM1, KDM5A, MAP1S, SMARD1, and UBE1C. Interacts with MUC1; the interaction is stimulated by 7 beta-estradiol (E2) and enhances ESR1-mediated transcription. Interacts with DNTTIP2, and UIMC1. Interacts with KMT2D/MLL2. Interacts with ATAD2; the interaction is enhanced by estradiol. Interacts with KIF18A and LDB1. Interacts with RLIM (via its C-terminus). Interacts with MACROD1. Interacts with SH2D4A and PLCG. Interacts with SH2D4A; the interaction blocks binding to PLCG and inhibits estrogen-induced cell proliferation. Interacts with DYNLL1. Interacts with CCDC62; the interaction requires estradiol and appears to enhance the transcription of target genes. Interacts with NR2C1; the interaction prevents homodimerization of ESR1 and suppresses its transcriptional activity and cell growth. Interacts with DNAAF4. Interacts with PRMT2. Interacts with RBFOX2. Interacts with EP300; the interaction is estrogen-dependent and enhanced by CITED1. Interacts with CITED1; the interaction is estrogen-dependent. Interacts with FAM120B, FOXL2, PHB2 and SLC30A9. Interacts with coactivators NCOA3 and NCOA6. Interacts with STK3/MST2 only in the presence of SAV1 and vice-versa. Binds to CSNK1D. Interacts with NCOA2; NCOA2 can interact with ESR1 AF-1 and AF-2 domains simultaneously and mediate their transcriptional synergy. Interacts with DDX5. Interacts with NCOA1; the interaction seems to require a self-association of N-terminal and C-terminal regions. Interacts with ZNF366, DDX17, NFKB1, RELA, SP1 and SP3. Interacts with NRIP1. Interacts with GPER1; the interaction occurs in an estrogen-dependent manner. Interacts with CLOCK and the interaction is stimulated by estrogen. Interacts with TRIP4 (ufmylated); estrogen dependent. Interacts with LMTK3; the interaction phosphorylates ESR1 (in vitro) and protects it against proteasomal degradation. Interacts with CCAR2 (via N-terminus) in a ligand-independent manner. Interacts with ZFHX3. Interacts with SFR1 in a ligand-dependent and -independent manner. Interacts with DCAF13, LATS1 and DCAF1; regulates ESR1 ubiquitination and ubiquitin-mediated proteasomal degradation. Interacts (via DNA-binding domain) with POU4F2 (C-terminus); this interaction increases the estrogen receptor ESR1 transcriptional activity in a DNA- and ligand 17-beta-estradiol-independent manner. Interacts with ESRRB isoform 1. Interacts with UBE3A and WBP2. Interacts with GTF2B. Interacts with RBM39. In the absence of hormonal ligand, interacts with TACC1. Interacts with PI3KR1 or PI3KR2 and PTK2/FAK1. Interacts with SRC. Interacts with BAG1; the interaction is promoted in the absence of estradiol (17-beta-estradiol/E2). Interacts with and ubiquitinated by STUB1; the interaction is promoted in the absence of estradiol (17-beta-estradiol/E2). Interacts with NEDD8. Ubiquitinated; regulated by LATS1 via DCAF1 it leads to ESR1 proteasomal degradation. Deubiquitinated by OTUB1. Ubiquitinated by STUB1/CHIP; in the CA1 hippocampal region following loss of endogenous circulating estradiol (17-beta-estradiol/E2). Ubiquitinated by UBR5, leading to its degradation: UBR5 specifically recognizes and binds ligand-bound ESR1 when it is not associated with coactivators (NCOAs). In presence of NCOAs, the UBR5-degron is not accessible, preventing its ubiquitination and degradation. Post-translationally, phosphorylated by cyclin A/CDK2 and CK1. Phosphorylation probably enhances transcriptional activity. Dephosphorylation at Ser-118 by PPP5C inhibits its transactivation activity. Phosphorylated by LMTK3 (in vitro). In terms of processing, palmitoylated at Cys-447 by ZDHHC7 and ZDHHC21. Palmitoylation is required for plasma membrane targeting and for rapid intracellular signaling via ERK and AKT kinases and cAMP generation, but not for signaling mediated by the nuclear hormone receptor. Dimethylated by PRMT1 at Arg-260. The methylation may favor cytoplasmic localization. Demethylated by JMJD6 at Arg-260.

The protein localises to the nucleus. Its subcellular location is the cytoplasm. The protein resides in the golgi apparatus. It localises to the cell membrane. Nuclear hormone receptor. The steroid hormones and their receptors are involved in the regulation of eukaryotic gene expression and affect cellular proliferation and differentiation in target tissues. Ligand-dependent nuclear transactivation involves either direct homodimer binding to a palindromic estrogen response element (ERE) sequence or association with other DNA-binding transcription factors, such as AP-1/c-Jun, c-Fos, ATF-2, Sp1 and Sp3, to mediate ERE-independent signaling. Ligand binding induces a conformational change allowing subsequent or combinatorial association with multiprotein coactivator complexes through LXXLL motifs of their respective components. Mutual transrepression occurs between the estrogen receptor (ER) and NF-kappa-B in a cell-type specific manner. Decreases NF-kappa-B DNA-binding activity and inhibits NF-kappa-B-mediated transcription from the IL6 promoter and displace RELA/p65 and associated coregulators from the promoter. Recruited to the NF-kappa-B response element of the CCL2 and IL8 promoters and can displace CREBBP. Present with NF-kappa-B components RELA/p65 and NFKB1/p50 on ERE sequences. Can also act synergistically with NF-kappa-B to activate transcription involving respective recruitment adjacent response elements; the function involves CREBBP. Can activate the transcriptional activity of TFF1. Also mediates membrane-initiated estrogen signaling involving various kinase cascades. Essential for MTA1-mediated transcriptional regulation of BRCA1 and BCAS3. Maintains neuronal survival in response to ischemic reperfusion injury when in the presence of circulating estradiol (17-beta-estradiol/E2). The protein is Estrogen receptor (ESR1) of Equus caballus (Horse).